Reading from the N-terminus, the 261-residue chain is Calbindin (261 aa).

The residue at position 2 (alanine 2) is an N-acetylalanine. Positions 2–7 (AESHLQ) are interaction with RANBP9. 5 consecutive EF-hand domains span residues 11–46 (ITAS…LLQA), 53–88 (ELSP…EENF), 98–133 (KSCE…LLEK), 142–177 (KLAE…QENF), and 186–221 (MCGK…LCEK). Ca(2+) contacts are provided by aspartate 24, aspartate 26, serine 28, tyrosine 30, and glutamate 35. 14 residues coordinate Ca(2+): aspartate 111, aspartate 113, serine 115, glutamate 122, aspartate 155, asparagine 157, aspartate 159, lysine 161, glutamate 166, aspartate 199, aspartate 201, asparagine 203, tyrosine 205, and glutamate 210.

Belongs to the calbindin family. In terms of assembly, interacts with RANBP9.

Its function is as follows. Buffers cytosolic calcium. May stimulate a membrane Ca(2+)-ATPase and a 3',5'-cyclic nucleotide phosphodiesterase. The sequence is that of Calbindin (Calb1) from Rattus norvegicus (Rat).